Here is a 438-residue protein sequence, read N- to C-terminus: Serine hydroxymethyltransferase 1 (438 aa).

(6S)-5,6,7,8-tetrahydrofolate is bound by residues Leu130 and 134 to 136; that span reads GHL. Residue Lys239 is modified to N6-(pyridoxal phosphate)lysine.

It belongs to the SHMT family. In terms of assembly, homodimer. It depends on pyridoxal 5'-phosphate as a cofactor.

The protein resides in the cytoplasm. It carries out the reaction (6R)-5,10-methylene-5,6,7,8-tetrahydrofolate + glycine + H2O = (6S)-5,6,7,8-tetrahydrofolate + L-serine. It functions in the pathway one-carbon metabolism; tetrahydrofolate interconversion. It participates in amino-acid biosynthesis; glycine biosynthesis; glycine from L-serine: step 1/1. Functionally, catalyzes the reversible interconversion of serine and glycine with tetrahydrofolate (THF) serving as the one-carbon carrier. This reaction serves as the major source of one-carbon groups required for the biosynthesis of purines, thymidylate, methionine, and other important biomolecules. Also exhibits THF-independent aldolase activity toward beta-hydroxyamino acids, producing glycine and aldehydes, via a retro-aldol mechanism. The sequence is that of Serine hydroxymethyltransferase 1 from Mycobacterium tuberculosis (strain CDC 1551 / Oshkosh).